Reading from the N-terminus, the 226-residue chain is Cytidylate kinase (226 aa).

An ATP-binding site is contributed by 10 to 18 (GPASSGKST).

The protein belongs to the cytidylate kinase family. Type 1 subfamily.

It is found in the cytoplasm. The enzyme catalyses CMP + ATP = CDP + ADP. The catalysed reaction is dCMP + ATP = dCDP + ADP. This Streptococcus pyogenes serotype M4 (strain MGAS10750) protein is Cytidylate kinase.